A 488-amino-acid chain; its full sequence is Serine hydroxymethyltransferase, mitochondrial (488 aa).

The N-terminal 20 residues, 1-20 (MAVLRQFVKNSYSSIPKRFY), are a transit peptide targeting the mitochondrion. Lys-265 carries the post-translational modification N6-(pyridoxal phosphate)lysine.

Belongs to the SHMT family. In terms of assembly, homotetramer. Pyridoxal 5'-phosphate is required as a cofactor.

It localises to the mitochondrion. It carries out the reaction (6R)-5,10-methylene-5,6,7,8-tetrahydrofolate + glycine + H2O = (6S)-5,6,7,8-tetrahydrofolate + L-serine. The protein operates within one-carbon metabolism; tetrahydrofolate interconversion. Its function is as follows. Interconversion of serine and glycine. The protein is Serine hydroxymethyltransferase, mitochondrial (shm2) of Schizosaccharomyces pombe (strain 972 / ATCC 24843) (Fission yeast).